The chain runs to 143 residues: Glycine cleavage system H protein 1 (143 aa).

Positions 26–107 constitute a Lipoyl-binding domain; it reads IYSVGMASIL…PYSSWIAKLK (82 aa). At lysine 67 the chain carries N6-lipoyllysine.

It belongs to the GcvH family. The glycine cleavage system is composed of four proteins: P, T, L and H. The cofactor is (R)-lipoate.

Functionally, the glycine cleavage system catalyzes the degradation of glycine. The H protein shuttles the methylamine group of glycine from the P protein to the T protein. This chain is Glycine cleavage system H protein 1, found in Aquifex aeolicus (strain VF5).